Reading from the N-terminus, the 251-residue chain is Putative imidazole glycerol phosphate synthase subunit hisF2 (251 aa).

Residue Asp-130 is part of the active site.

It belongs to the HisA/HisF family. Heterodimer of HisH and HisF.

It localises to the cytoplasm. It catalyses the reaction 5-[(5-phospho-1-deoxy-D-ribulos-1-ylimino)methylamino]-1-(5-phospho-beta-D-ribosyl)imidazole-4-carboxamide + L-glutamine = D-erythro-1-(imidazol-4-yl)glycerol 3-phosphate + 5-amino-1-(5-phospho-beta-D-ribosyl)imidazole-4-carboxamide + L-glutamate + H(+). It functions in the pathway amino-acid biosynthesis; L-histidine biosynthesis; L-histidine from 5-phospho-alpha-D-ribose 1-diphosphate: step 5/9. IGPS catalyzes the conversion of PRFAR and glutamine to IGP, AICAR and glutamate. The HisF subunit catalyzes the cyclization activity that produces IGP and AICAR from PRFAR using the ammonia provided by the HisH subunit. This chain is Putative imidazole glycerol phosphate synthase subunit hisF2 (hisF2), found in Pseudomonas aeruginosa (strain ATCC 15692 / DSM 22644 / CIP 104116 / JCM 14847 / LMG 12228 / 1C / PRS 101 / PAO1).